The sequence spans 188 residues: Trafficking protein particle complex subunit 5 (188 aa).

Ser10 carries the phosphoserine modification.

The protein belongs to the TRAPP small subunits family. BET3 subfamily. As to quaternary structure, component of the multisubunit TRAPP (transport protein particle) complex, which includes at least TRAPPC2, TRAPPC2L, TRAPPC3, TRAPPC3L, TRAPPC4, TRAPPC5, TRAPPC8, TRAPPC9, TRAPPC10, TRAPPC11 and TRAPPC12.

It is found in the golgi apparatus. The protein resides in the cis-Golgi network. It localises to the endoplasmic reticulum. Its function is as follows. May play a role in vesicular transport from endoplasmic reticulum to Golgi. This is Trafficking protein particle complex subunit 5 (TRAPPC5) from Homo sapiens (Human).